Reading from the N-terminus, the 806-residue chain is Leucine--tRNA ligase (806 aa).

Residues 40 to 51 (PYPSGAGLHVGH) carry the 'HIGH' region motif. A 'KMSKS' region motif is present at residues 578 to 582 (KMSKS). Lysine 581 lines the ATP pocket.

It belongs to the class-I aminoacyl-tRNA synthetase family.

The protein resides in the cytoplasm. It catalyses the reaction tRNA(Leu) + L-leucine + ATP = L-leucyl-tRNA(Leu) + AMP + diphosphate. The polypeptide is Leucine--tRNA ligase (Staphylococcus aureus (strain MSSA476)).